The sequence spans 301 residues: MPRISDRVTYIYVEHSKINRVDGSITVAESRGIVRIPASMIGILLLGPGTDISHRAMELLGDSGTSVAWVGEQGVRNYAHGRSLSHTSRFLELQAKLVSNTRSRLQVARKMYQMRFPEEDVSSLTMQQLRAKEGARIRKIYRKMSAEYGVDWNGRTYDPDDFEGGDPVNQALSAANVALYGLAYSAIAAMGLATGLGFVHTGHDLSFVYDIADLYKADITVPVAFEIASEYEEGDNVGKISRQKVRDKFIGGKLFATIVRDIQLLFGIKEEEQLNVEPLSLWDNREGNIKYGINYSNENED.

Positions 133, 200, and 213 each coordinate Mn(2+).

It belongs to the CRISPR-associated endonuclease Cas1 family. In terms of assembly, homodimer, forms a heterotetramer with a Cas2 homodimer. The cofactor is Mg(2+). It depends on Mn(2+) as a cofactor.

Functionally, CRISPR (clustered regularly interspaced short palindromic repeat), is an adaptive immune system that provides protection against mobile genetic elements (viruses, transposable elements and conjugative plasmids). CRISPR clusters contain spacers, sequences complementary to antecedent mobile elements, and target invading nucleic acids. CRISPR clusters are transcribed and processed into CRISPR RNA (crRNA). Acts as a dsDNA endonuclease. Involved in the integration of spacer DNA into the CRISPR cassette. This is CRISPR-associated endonuclease Cas1 from Clostridium sp. (strain SY8519).